Here is a 344-residue protein sequence, read N- to C-terminus: Heat-inducible transcription repressor HrcA (344 aa).

The protein belongs to the HrcA family.

Its function is as follows. Negative regulator of class I heat shock genes (grpE-dnaK-dnaJ and groELS operons). Prevents heat-shock induction of these operons. The polypeptide is Heat-inducible transcription repressor HrcA (Corynebacterium aurimucosum (strain ATCC 700975 / DSM 44827 / CIP 107346 / CN-1) (Corynebacterium nigricans)).